The sequence spans 183 residues: MNQDKPYYQIVYAPNDIFKKQAEYIDIVDDNIRTIVDKMLQNLHIERAVGLGANMVGILKRIAVVDLHENNKSSPIVFINPNITYFSEEKQTFIEGSLSFPGIEASITRSKAIKVKYLDYNGNKQELAAEGFLATVIQHEIEYLNGKTFLDSLSKLKRDTLLKKMLKHIKLHPPHIHGSGCRH.

The active site involves glutamate 140.

Belongs to the polypeptide deformylase family.

The polypeptide is Peptide deformylase-like (Rickettsia conorii (strain ATCC VR-613 / Malish 7)).